A 311-amino-acid chain; its full sequence is Homoserine kinase (311 aa).

ATP is bound at residue P88–A98.

Belongs to the GHMP kinase family. Homoserine kinase subfamily.

The protein resides in the cytoplasm. It carries out the reaction L-homoserine + ATP = O-phospho-L-homoserine + ADP + H(+). Its pathway is amino-acid biosynthesis; L-threonine biosynthesis; L-threonine from L-aspartate: step 4/5. Its function is as follows. Catalyzes the ATP-dependent phosphorylation of L-homoserine to L-homoserine phosphate. This is Homoserine kinase from Saccharolobus solfataricus (strain ATCC 35092 / DSM 1617 / JCM 11322 / P2) (Sulfolobus solfataricus).